A 261-amino-acid chain; its full sequence is Indole-3-glycerol phosphate synthase (261 aa).

The protein belongs to the TrpC family.

The enzyme catalyses 1-(2-carboxyphenylamino)-1-deoxy-D-ribulose 5-phosphate + H(+) = (1S,2R)-1-C-(indol-3-yl)glycerol 3-phosphate + CO2 + H2O. It functions in the pathway amino-acid biosynthesis; L-tryptophan biosynthesis; L-tryptophan from chorismate: step 4/5. The chain is Indole-3-glycerol phosphate synthase from Burkholderia vietnamiensis (strain G4 / LMG 22486) (Burkholderia cepacia (strain R1808)).